Here is a 158-residue protein sequence, read N- to C-terminus: NADH-quinone oxidoreductase subunit B (158 aa).

Residues C37, C38, C102, and C132 each contribute to the [4Fe-4S] cluster site.

Belongs to the complex I 20 kDa subunit family. As to quaternary structure, NDH-1 is composed of 14 different subunits. Subunits NuoB, C, D, E, F, and G constitute the peripheral sector of the complex. It depends on [4Fe-4S] cluster as a cofactor.

The protein resides in the cell inner membrane. The enzyme catalyses a quinone + NADH + 5 H(+)(in) = a quinol + NAD(+) + 4 H(+)(out). NDH-1 shuttles electrons from NADH, via FMN and iron-sulfur (Fe-S) centers, to quinones in the respiratory chain. Couples the redox reaction to proton translocation (for every two electrons transferred, four hydrogen ions are translocated across the cytoplasmic membrane), and thus conserves the redox energy in a proton gradient. The protein is NADH-quinone oxidoreductase subunit B of Nitrosomonas europaea (strain ATCC 19718 / CIP 103999 / KCTC 2705 / NBRC 14298).